The following is a 204-amino-acid chain: Cysteine-rich protein 3 (204 aa).

One can recognise an LIM zinc-binding 1 domain in the interval 3–64; that stretch reads WTCPRCQQPV…KPCYGALFGP (62 aa). The disordered stretch occupies residues 88-107; it reads ISLSPSNFSPPRPRTGLSRA. An LIM zinc-binding 2 domain is found at 122–183; the sequence is SLCPGCGDPV…IPCYGYLFGP (62 aa).

As to expression, expressed specifically by the thymus.

Its subcellular location is the cytoplasm. The sequence is that of Cysteine-rich protein 3 (Crip3) from Mus musculus (Mouse).